The following is a 495-amino-acid chain: NADH-ubiquinone oxidoreductase chain 4 (495 aa).

The next 11 helical transmembrane spans lie at 9–29, 39–59, 89–109, 139–159, 173–193, 214–234, 272–292, 313–333, 335–355, 367–387, and 413–433; these read YSNL…PLFI, LIGL…RIQF, ISLF…SVGW, LLLF…IIGV, FFLY…LILF, IFLW…VPVH, FPEA…IAII, VAHM…GIGG, ILPM…VGVL, YGGL…FTLA, and LVAT…LWLY.

The protein belongs to the complex I subunit 4 family.

Its subcellular location is the mitochondrion membrane. The enzyme catalyses a ubiquinone + NADH + 5 H(+)(in) = a ubiquinol + NAD(+) + 4 H(+)(out). Its function is as follows. Core subunit of the mitochondrial membrane respiratory chain NADH dehydrogenase (Complex I) that is believed to belong to the minimal assembly required for catalysis. Complex I functions in the transfer of electrons from NADH to the respiratory chain. The immediate electron acceptor for the enzyme is believed to be ubiquinone. This is NADH-ubiquinone oxidoreductase chain 4 (ND4) from Brassica campestris (Field mustard).